The primary structure comprises 469 residues: Adenosylhomocysteinase (469 aa).

T63, D139, and E164 together coordinate substrate. 165 to 167 lines the NAD(+) pocket; it reads TTT. Residues K194 and D198 each coordinate substrate. Residues N199, 228–233, E251, N300, 321–323, and N375 each bind NAD(+); these read GYGDVG and IGH.

The protein belongs to the adenosylhomocysteinase family. The cofactor is NAD(+).

The protein localises to the cytoplasm. It carries out the reaction S-adenosyl-L-homocysteine + H2O = L-homocysteine + adenosine. It participates in amino-acid biosynthesis; L-homocysteine biosynthesis; L-homocysteine from S-adenosyl-L-homocysteine: step 1/1. Its function is as follows. May play a key role in the regulation of the intracellular concentration of adenosylhomocysteine. This chain is Adenosylhomocysteinase, found in Pseudomonas putida (strain GB-1).